Consider the following 435-residue polypeptide: 3-ketoacyl-CoA thiolase (435 aa).

Catalysis depends on Cys-98, which acts as the Acyl-thioester intermediate. Catalysis depends on proton acceptor residues His-391 and Cys-421.

The protein belongs to the thiolase-like superfamily. Thiolase family. In terms of assembly, heterotetramer of two alpha chains (FadJ) and two beta chains (FadI).

Its subcellular location is the cytoplasm. It catalyses the reaction an acyl-CoA + acetyl-CoA = a 3-oxoacyl-CoA + CoA. It functions in the pathway lipid metabolism; fatty acid beta-oxidation. Its function is as follows. Catalyzes the final step of fatty acid oxidation in which acetyl-CoA is released and the CoA ester of a fatty acid two carbons shorter is formed. The sequence is that of 3-ketoacyl-CoA thiolase from Colwellia psychrerythraea (strain 34H / ATCC BAA-681) (Vibrio psychroerythus).